We begin with the raw amino-acid sequence, 1001 residues long: Protein MEI2-like 4 (1001 aa).

Residues 100-120 (HANLPPSPWRPDQETGRQTDS) form a disordered region. RRM domains lie at 275–348 (RTLF…YSIP) and 360–433 (GTIV…TSRL). 2 disordered regions span residues 767–815 (GGPS…KKQY) and 941–1001 (FHSD…PAKD). Basic and acidic residues predominate over residues 793 to 803 (PGERMRSRRND). Positions 978–994 (DISITSVNCDTSTNGVD) are enriched in polar residues.

Functionally, probable RNA-binding protein that may play a role in growth regulation. The polypeptide is Protein MEI2-like 4 (ML4) (Oryza sativa subsp. japonica (Rice)).